A 142-amino-acid chain; its full sequence is HTH-type transcriptional regulator MntR (142 aa).

Positions 1-63 (MPTPSMEDYI…YEKYRGLVLT (63 aa)) constitute an HTH dtxR-type domain. Residues aspartate 8, glutamate 11, histidine 77, glutamate 99, glutamate 102, and histidine 103 each coordinate Mn(2+).

Belongs to the DtxR/MntR family. In terms of assembly, homodimer.

Its subcellular location is the cytoplasm. Its activity is regulated as follows. DNA binding is strongly activated by Mn(2+). Its function is as follows. Central regulator of manganese homeostasis. The protein is HTH-type transcriptional regulator MntR of Bacillus cereus (strain ATCC 14579 / DSM 31 / CCUG 7414 / JCM 2152 / NBRC 15305 / NCIMB 9373 / NCTC 2599 / NRRL B-3711).